The primary structure comprises 569 residues: Urease subunit alpha (569 aa).

Residues Gly131–Leu569 form the Urease domain. The Ni(2+) site is built by His136, His138, and Lys219. Lys219 is modified (N6-carboxylysine). His221 is a substrate binding site. Positions 248 and 274 each coordinate Ni(2+). The active-site Proton donor is His322. Asp362 provides a ligand contact to Ni(2+).

This sequence belongs to the metallo-dependent hydrolases superfamily. Urease alpha subunit family. As to quaternary structure, heterotrimer of UreA (gamma), UreB (beta) and UreC (alpha) subunits. Three heterotrimers associate to form the active enzyme. The cofactor is Ni cation. In terms of processing, carboxylation allows a single lysine to coordinate two nickel ions.

The protein resides in the cytoplasm. The enzyme catalyses urea + 2 H2O + H(+) = hydrogencarbonate + 2 NH4(+). Its pathway is nitrogen metabolism; urea degradation; CO(2) and NH(3) from urea (urease route): step 1/1. The protein is Urease subunit alpha of Synechococcus sp. (strain CC9311).